The primary structure comprises 161 residues: Ureidoglycolate lyase (161 aa).

This sequence belongs to the ureidoglycolate lyase family. In terms of assembly, homodimer. Requires Ni(2+) as cofactor.

It carries out the reaction (S)-ureidoglycolate = urea + glyoxylate. It participates in nitrogen metabolism; (S)-allantoin degradation. Functionally, catalyzes the catabolism of the allantoin degradation intermediate (S)-ureidoglycolate, generating urea and glyoxylate. Involved in the utilization of allantoin as nitrogen source. This Rhodobacter capsulatus (strain ATCC BAA-309 / NBRC 16581 / SB1003) protein is Ureidoglycolate lyase.